Here is a 325-residue protein sequence, read N- to C-terminus: MAGTQDPSSLEEILWRSPSHVQMMGGYLHSNNILFYFAESPFFDATSNNASLAIQANYNEAFRHFVETREAFEARLKTMQGLEFMVAYDPLQAAAGANAQFVHEPSNVWVIRKQTRRKRSGFEDEVVVLATFFVVGDCIYMAPSAASVIGNRILSAVTSLTSLLKTASTLPKFTPSHGHTYLPPAPKSTDVSHPSVQSQTSKENTPMPDADATNKSQSFTGSQNSSGPAVYDMRSLAESFSLVARYGDEFMDESPLMGEPGSFILSRPGDADRGAAPKQSQPSSTNAGGRVGTPLAKVDTPGKLSDKNSAAEEPKLRKKKSKPAS.

Disordered stretches follow at residues 175 to 230 (PSHG…GPAV) and 253 to 325 (ESPL…KPAS). Polar residues-rich tracts occupy residues 189-204 (TDVSHPSVQSQTSKEN), 213-227 (TNKSQSFTGSQNSSG), and 278-287 (KQSQPSSTNA). Positions 304–315 (LSDKNSAAEEPK) are enriched in basic and acidic residues. A compositionally biased stretch (basic residues) spans 316–325 (LRKKKSKPAS).

It belongs to the Mediator complex subunit 6 family. Component of the Mediator complex.

The protein localises to the nucleus. Its function is as follows. Component of the Mediator complex, a coactivator involved in the regulated transcription of nearly all RNA polymerase II-dependent genes. Mediator functions as a bridge to convey information from gene-specific regulatory proteins to the basal RNA polymerase II transcription machinery. Mediator is recruited to promoters by direct interactions with regulatory proteins and serves as a scaffold for the assembly of a functional preinitiation complex with RNA polymerase II and the general transcription factors. This chain is Mediator of RNA polymerase II transcription subunit 6 (med6), found in Emericella nidulans (strain FGSC A4 / ATCC 38163 / CBS 112.46 / NRRL 194 / M139) (Aspergillus nidulans).